The primary structure comprises 137 residues: Nucleoside diphosphate kinase (137 aa).

6 residues coordinate ATP: K9, F57, R85, T91, R102, and N112. The active-site Pros-phosphohistidine intermediate is H115.

This sequence belongs to the NDK family. As to quaternary structure, homotetramer. Requires Mg(2+) as cofactor.

It is found in the cytoplasm. It carries out the reaction a 2'-deoxyribonucleoside 5'-diphosphate + ATP = a 2'-deoxyribonucleoside 5'-triphosphate + ADP. It catalyses the reaction a ribonucleoside 5'-diphosphate + ATP = a ribonucleoside 5'-triphosphate + ADP. In terms of biological role, major role in the synthesis of nucleoside triphosphates other than ATP. The ATP gamma phosphate is transferred to the NDP beta phosphate via a ping-pong mechanism, using a phosphorylated active-site intermediate. This is Nucleoside diphosphate kinase from Campylobacter jejuni subsp. doylei (strain ATCC BAA-1458 / RM4099 / 269.97).